Consider the following 65-residue polypeptide: Large ribosomal subunit protein bL33m (65 aa).

The transit peptide at 1–8 (MFLSAVFF) directs the protein to the mitochondrion.

The protein belongs to the bacterial ribosomal protein bL33 family. As to quaternary structure, component of the mitochondrial large ribosomal subunit (mt-LSU). Mature mammalian 55S mitochondrial ribosomes consist of a small (28S) and a large (39S) subunit. The 28S small subunit contains a 12S ribosomal RNA (12S mt-rRNA) and 30 different proteins. The 39S large subunit contains a 16S rRNA (16S mt-rRNA), a copy of mitochondrial valine transfer RNA (mt-tRNA(Val)), which plays an integral structural role, and 52 different proteins.

The protein resides in the mitochondrion. The protein is Large ribosomal subunit protein bL33m (MRPL33) of Homo sapiens (Human).